Reading from the N-terminus, the 264-residue chain is S-adenosylmethionine decarboxylase proenzyme (264 aa).

The active-site Schiff-base intermediate with substrate; via pyruvic acid is serine 112. The residue at position 112 (serine 112) is a Pyruvic acid (Ser); by autocatalysis. Residue histidine 117 is the Proton acceptor; for processing activity of the active site. The active-site Proton donor; for catalytic activity is the cysteine 140.

This sequence belongs to the prokaryotic AdoMetDC family. Type 2 subfamily. As to quaternary structure, heterooctamer of four alpha and four beta chains arranged as a tetramer of alpha/beta heterodimers. Pyruvate is required as a cofactor. In terms of processing, is synthesized initially as an inactive proenzyme. Formation of the active enzyme involves a self-maturation process in which the active site pyruvoyl group is generated from an internal serine residue via an autocatalytic post-translational modification. Two non-identical subunits are generated from the proenzyme in this reaction, and the pyruvate is formed at the N-terminus of the alpha chain, which is derived from the carboxyl end of the proenzyme. The post-translation cleavage follows an unusual pathway, termed non-hydrolytic serinolysis, in which the side chain hydroxyl group of the serine supplies its oxygen atom to form the C-terminus of the beta chain, while the remainder of the serine residue undergoes an oxidative deamination to produce ammonia and the pyruvoyl group blocking the N-terminus of the alpha chain.

The enzyme catalyses S-adenosyl-L-methionine + H(+) = S-adenosyl 3-(methylsulfanyl)propylamine + CO2. It functions in the pathway amine and polyamine biosynthesis; S-adenosylmethioninamine biosynthesis; S-adenosylmethioninamine from S-adenosyl-L-methionine: step 1/1. Its function is as follows. Catalyzes the decarboxylation of S-adenosylmethionine to S-adenosylmethioninamine (dcAdoMet), the propylamine donor required for the synthesis of the polyamines spermine and spermidine from the diamine putrescine. This Sodalis glossinidius (strain morsitans) protein is S-adenosylmethionine decarboxylase proenzyme.